A 208-amino-acid polypeptide reads, in one-letter code: Interleukin-6 (208 aa).

The first 20 residues, 1–20 (MNSLSTIAFSLGLLLVTATA), serve as a signal peptide directing secretion. A disulfide bridge connects residues C67 and C73. S76 carries the post-translational modification Phosphoserine. A disulfide bridge links C96 with C106. N167 carries N-linked (GlcNAc...) asparagine glycosylation.

It belongs to the IL-6 superfamily. As to quaternary structure, component of a hexamer of two molecules each of IL6, IL6R and IL6ST; first binds to IL6R to associate with the signaling subunit IL6ST. Interacts with IL6R (via the N-terminal ectodomain); this interaction may be affected by IL6R-binding with SORL1, hence decreasing IL6 cis signaling. Interacts with SORL1 (via the N-terminal ectodomain); this interaction leads to IL6 internalization and lysosomal degradation. May form a trimeric complex with the soluble SORL1 ectodomain and soluble IL6R receptor; this interaction might stabilize circulating IL6, hence promoting IL6 trans signaling.

The protein localises to the secreted. Functionally, cytokine with a wide variety of biological functions in immunity, tissue regeneration, and metabolism. Binds to IL6R, then the complex associates to the signaling subunit IL6ST/gp130 to trigger the intracellular IL6-signaling pathway. The interaction with the membrane-bound IL6R and IL6ST stimulates 'classic signaling', whereas the binding of IL6 and soluble IL6R to IL6ST stimulates 'trans-signaling'. Alternatively, 'cluster signaling' occurs when membrane-bound IL6:IL6R complexes on transmitter cells activate IL6ST receptors on neighboring receiver cells. IL6 is a potent inducer of the acute phase response. Rapid production of IL6 contributes to host defense during infection and tissue injury, but excessive IL6 synthesis is involved in disease pathology. In the innate immune response, is synthesized by myeloid cells, such as macrophages and dendritic cells, upon recognition of pathogens through toll-like receptors (TLRs) at the site of infection or tissue injury. In the adaptive immune response, is required for the differentiation of B cells into immunoglobulin-secreting cells. Plays a major role in the differentiation of CD4(+) T cell subsets. Essential factor for the development of T follicular helper (Tfh) cells that are required for the induction of germinal-center formation. Required to drive naive CD4(+) T cells to the Th17 lineage. Also required for proliferation of myeloma cells and the survival of plasmablast cells. In terms of biological role, acts as an essential factor in bone homeostasis and on vessels directly or indirectly by induction of VEGF, resulting in increased angiogenesis activity and vascular permeability. Induces, through 'trans-signaling' and synergistically with IL1B and TNF, the production of VEGF. Involved in metabolic controls, is discharged into the bloodstream after muscle contraction increasing lipolysis and improving insulin resistance. 'Trans-signaling' in central nervous system also regulates energy and glucose homeostasis. Mediates, through GLP-1, crosstalk between insulin-sensitive tissues, intestinal L cells and pancreatic islets to adapt to changes in insulin demand. Also acts as a myokine. Plays a protective role during liver injury, being required for maintenance of tissue regeneration. Also has a pivotal role in iron metabolism by regulating HAMP/hepcidin expression upon inflammation or bacterial infection. Through activation of IL6ST-YAP-NOTCH pathway, induces inflammation-induced epithelial regeneration. This chain is Interleukin-6 (IL6), found in Delphinapterus leucas (Beluga whale).